The sequence spans 447 residues: 3-phosphoshikimate 1-carboxyvinyltransferase 2 (447 aa).

3-phosphoshikimate-binding residues include lysine 40, serine 41, and arginine 45. Lysine 40 contributes to the phosphoenolpyruvate binding site. 2 residues coordinate phosphoenolpyruvate: glycine 109 and arginine 138. 5 residues coordinate 3-phosphoshikimate: serine 184, serine 185, glutamine 186, aspartate 329, and histidine 356. Residue glutamine 186 coordinates phosphoenolpyruvate. The active-site Proton acceptor is aspartate 329. Arginine 360, arginine 403, and lysine 428 together coordinate phosphoenolpyruvate.

It belongs to the EPSP synthase family. Monomer.

It is found in the cytoplasm. The catalysed reaction is 3-phosphoshikimate + phosphoenolpyruvate = 5-O-(1-carboxyvinyl)-3-phosphoshikimate + phosphate. Its pathway is metabolic intermediate biosynthesis; chorismate biosynthesis; chorismate from D-erythrose 4-phosphate and phosphoenolpyruvate: step 6/7. In terms of biological role, catalyzes the transfer of the enolpyruvyl moiety of phosphoenolpyruvate (PEP) to the 5-hydroxyl of shikimate-3-phosphate (S3P) to produce enolpyruvyl shikimate-3-phosphate and inorganic phosphate. This is 3-phosphoshikimate 1-carboxyvinyltransferase 2 from Halalkalibacterium halodurans (strain ATCC BAA-125 / DSM 18197 / FERM 7344 / JCM 9153 / C-125) (Bacillus halodurans).